Here is a 210-residue protein sequence, read N- to C-terminus: CASP-like protein 3A2 (210 aa).

At 1–45 (MMMNGQKMAAAEVAVQLPESKMVTENIGGAAAAMRPFGRKAEVMN) the chain is on the cytoplasmic side. A helical membrane pass occupies residues 46–66 (VLLRVLCMVTSVAALSSMVTA). Over 67-92 (QQSSTVSIYGFMLPIQSKWSFSHSFE) the chain is Extracellular. Residues 93–113 (YVVGVSAVVAAHSLLQLLISV) traverse the membrane as a helical segment. Over 114 to 128 (SRLLRKSPVIQSRSH) the chain is Cytoplasmic. A helical membrane pass occupies residues 129–149 (AWLVFAGDQVFAYAMISAGAA). Topologically, residues 150–178 (ASGVTNLNRTGIRHTALPNFCKPLQSFCD) are extracellular. N-linked (GlcNAc...) asparagine glycosylation occurs at N157. Residues 179-199 (HVAVSIFFTFLSCFLLAASAV) form a helical membrane-spanning segment. At 200 to 210 (QEVIWLSRSKY) the chain is on the cytoplasmic side.

This sequence belongs to the Casparian strip membrane proteins (CASP) family. In terms of assembly, homodimer and heterodimers.

The protein localises to the cell membrane. The chain is CASP-like protein 3A2 from Populus trichocarpa (Western balsam poplar).